The primary structure comprises 250 residues: Protein lin-28 homolog B (250 aa).

The tract at residues 1-26 (MAEGGASKGGGEEPGKLPEPAEEESQ) is disordered. Residues 29–102 (RGTGHCKWFN…GLESIRVTGP (74 aa)) form the CSD domain. A phosphoserine mark is found at S54, S96, S105, and S110. A disordered region spans residues 98-126 (RVTGPGGSPCLGSERRPKGKTLQKRKPKG). The Bipartite nuclear localization signal signature appears at 112 to 125 (RRPKGKTLQKRKPK). The segment covering 114–125 (PKGKTLQKRKPK) has biased composition (basic residues). CCHC-type zinc fingers lie at residues 127–144 (DRCY…ECSL) and 149–166 (KKCH…NCPH). 8 residues coordinate Zn(2+): C129, C132, H137, C142, C151, C154, H159, and C164. Residues 169 to 250 (VAQPPASSQG…GPSVQKRKKT (82 aa)) are disordered. The span at 173 to 191 (PASSQGRQEAESQPCTSTL) shows a compositional bias: polar residues. Residue S203 is modified to Phosphoserine. Residues 210 to 219 (ARAEISERSG) are compositionally biased toward basic and acidic residues. A compositionally biased stretch (polar residues) spans 220-231 (RSPQEASSTKSS). The Nucleolar localization signal signature appears at 239–250 (KKGPSVQKRKKT).

Belongs to the lin-28 family. Expressed at high levels in the placenta and, at mucher lower, in testis and fetal liver. Isoform 1 is only detected in placenta and in moderately and poorly differentiated hepatocellular carcinoma cells (at protein level). Isoform 2 is detected in fetal liver, non-tumor liver tissues, as well as well-differentiated tumor tissues (at protein level). Tends to be up-regulated in triple-negative (ER-,PR-,HER2-) breast tumors, as well as in liver, ovarian, and thyroid carcinomas.

Its subcellular location is the nucleus. The protein resides in the nucleolus. The protein localises to the cytoplasm. Its function is as follows. Suppressor of microRNA (miRNA) biogenesis, including that of let-7 and possibly of miR107, miR-143 and miR-200c. Binds primary let-7 transcripts (pri-let-7), including pri-let-7g and pri-let-7a-1, and sequester them in the nucleolus, away from the microprocessor complex, hence preventing their processing into mature miRNA. Does not act on pri-miR21. The repression of let-7 expression is required for normal development and contributes to maintain the pluripotent state of embryonic stem cells by preventing let-7-mediated differentiation. When overexpressed, recruits ZCCHC11/TUT4 uridylyltransferase to pre-let-7 transcripts, leading to their terminal uridylation and degradation. This activity might not be relevant in vivo, as LIN28B-mediated inhibition of let-7 miRNA maturation appears to be ZCCHC11-independent. Interaction with target pre-miRNAs occurs via an 5'-GGAG-3' motif in the pre-miRNA terminal loop. Mediates MYC-induced let-7 repression. When overexpressed, isoform 1 stimulates growth of the breast adenocarcinoma cell line MCF-7. Isoform 2 has no effect on cell growth. The protein is Protein lin-28 homolog B (LIN28B) of Homo sapiens (Human).